Consider the following 238-residue polypeptide: Cysteine-rich venom protein pseudechetoxin (238 aa).

The N-terminal stretch at 1 to 19 is a signal peptide; that stretch reads MIAFIVLLSLAAVLQQSSG. Positions 20-27 are excised as a propeptide; sequence TADFASES. The SCP domain maps to 38–164; the sequence is VDKHNALRRS…SSKYLYVCQY (127 aa). Residues Thr51 and Ser106 each contribute to the Zn(2+) site. Cystine bridges form between Cys75–Cys153, Cys92–Cys165, Cys148–Cys162, Cys184–Cys191, Cys187–Cys196, Cys200–Cys233, Cys209–Cys227, and Cys218–Cys231. The region spanning 200 to 233 is the ShKT domain; sequence CKRNNDFSNCKSLAKKSKCQTEWIKKKCPASCFC.

Expressed by the venom gland.

Its subcellular location is the secreted. Blocks olfactory (CNGA2) and retinal (CNGA1) cyclic nucleotide-gated (CNG) ion channel currents. Does not inhibit retinal (CNGA3) currents. It forms high-affinity contacts with the pore turret region and most likely inhibits CNG channel current by blocking the external entrance to the transmembrane pore. Is really more potent that Pseudecin. Does not affect neither depolarization- nor caffeine-induced contraction arterial smooth muscle. The polypeptide is Cysteine-rich venom protein pseudechetoxin (Pseudechis australis (Mulga snake)).